Here is a 185-residue protein sequence, read N- to C-terminus: Elongation factor P (185 aa).

The protein belongs to the elongation factor P family.

The protein localises to the cytoplasm. It functions in the pathway protein biosynthesis; polypeptide chain elongation. In terms of biological role, involved in peptide bond synthesis. Stimulates efficient translation and peptide-bond synthesis on native or reconstituted 70S ribosomes in vitro. Probably functions indirectly by altering the affinity of the ribosome for aminoacyl-tRNA, thus increasing their reactivity as acceptors for peptidyl transferase. This chain is Elongation factor P, found in Agathobacter rectalis (strain ATCC 33656 / DSM 3377 / JCM 17463 / KCTC 5835 / VPI 0990) (Eubacterium rectale).